A 564-amino-acid chain; its full sequence is Dihydroxy-acid dehydratase (564 aa).

Residue Cys51 participates in [2Fe-2S] cluster binding. Asp83 is a binding site for Mg(2+). [2Fe-2S] cluster is bound at residue Cys124. 2 residues coordinate Mg(2+): Asp125 and Lys126. Lys126 bears the N6-carboxylysine mark. Cys196 is a [2Fe-2S] cluster binding site. Glu448 contributes to the Mg(2+) binding site. Catalysis depends on Ser474, which acts as the Proton acceptor.

Belongs to the IlvD/Edd family. Homodimer. [2Fe-2S] cluster is required as a cofactor. Mg(2+) serves as cofactor.

It catalyses the reaction (2R)-2,3-dihydroxy-3-methylbutanoate = 3-methyl-2-oxobutanoate + H2O. The catalysed reaction is (2R,3R)-2,3-dihydroxy-3-methylpentanoate = (S)-3-methyl-2-oxopentanoate + H2O. Its pathway is amino-acid biosynthesis; L-isoleucine biosynthesis; L-isoleucine from 2-oxobutanoate: step 3/4. The protein operates within amino-acid biosynthesis; L-valine biosynthesis; L-valine from pyruvate: step 3/4. Its function is as follows. Functions in the biosynthesis of branched-chain amino acids. Catalyzes the dehydration of (2R,3R)-2,3-dihydroxy-3-methylpentanoate (2,3-dihydroxy-3-methylvalerate) into 2-oxo-3-methylpentanoate (2-oxo-3-methylvalerate) and of (2R)-2,3-dihydroxy-3-methylbutanoate (2,3-dihydroxyisovalerate) into 2-oxo-3-methylbutanoate (2-oxoisovalerate), the penultimate precursor to L-isoleucine and L-valine, respectively. The chain is Dihydroxy-acid dehydratase from Polynucleobacter asymbioticus (strain DSM 18221 / CIP 109841 / QLW-P1DMWA-1) (Polynucleobacter necessarius subsp. asymbioticus).